Consider the following 82-residue polypeptide: Cytochrome b559 subunit alpha (82 aa).

The helical transmembrane segment at 21 to 35 threads the bilayer; the sequence is VIHSITIPSLFIAGW. Heme is bound at residue His23.

This sequence belongs to the PsbE/PsbF family. Heterodimer of an alpha subunit and a beta subunit. PSII is composed of 1 copy each of membrane proteins PsbA, PsbB, PsbC, PsbD, PsbE, PsbF, PsbH, PsbI, PsbJ, PsbK, PsbL, PsbM, PsbT, PsbX, PsbY, PsbZ, Psb30/Ycf12, at least 3 peripheral proteins of the oxygen-evolving complex and a large number of cofactors. It forms dimeric complexes. Requires heme b as cofactor.

The protein localises to the plastid. It localises to the chloroplast thylakoid membrane. Its function is as follows. This b-type cytochrome is tightly associated with the reaction center of photosystem II (PSII). PSII is a light-driven water:plastoquinone oxidoreductase that uses light energy to abstract electrons from H(2)O, generating O(2) and a proton gradient subsequently used for ATP formation. It consists of a core antenna complex that captures photons, and an electron transfer chain that converts photonic excitation into a charge separation. This Stigeoclonium helveticum (Green alga) protein is Cytochrome b559 subunit alpha.